Here is a 255-residue protein sequence, read N- to C-terminus: Aliphatic sulfonates import ATP-binding protein SsuB (255 aa).

One can recognise an ABC transporter domain in the interval isoleucine 7–glutamine 231. An ATP-binding site is contributed by glycine 39–serine 46.

The protein belongs to the ABC transporter superfamily. Aliphatic sulfonates importer (TC 3.A.1.17.2) family. The complex is composed of two ATP-binding proteins (SsuB), two transmembrane proteins (SsuC) and a solute-binding protein (SsuA).

It localises to the cell membrane. The enzyme catalyses ATP + H2O + aliphatic sulfonate-[sulfonate-binding protein]Side 1 = ADP + phosphate + aliphatic sulfonateSide 2 + [sulfonate-binding protein]Side 1.. Functionally, part of the ABC transporter complex SsuABC involved in aliphatic sulfonates import. Responsible for energy coupling to the transport system. Is also involved in taurine transport. This chain is Aliphatic sulfonates import ATP-binding protein SsuB, found in Bacillus subtilis (strain 168).